We begin with the raw amino-acid sequence, 143 residues long: Large ribosomal subunit protein uL11 (143 aa).

The protein belongs to the universal ribosomal protein uL11 family. As to quaternary structure, part of the ribosomal stalk of the 50S ribosomal subunit. Interacts with L10 and the large rRNA to form the base of the stalk. L10 forms an elongated spine to which L12 dimers bind in a sequential fashion forming a multimeric L10(L12)X complex. In terms of processing, one or more lysine residues are methylated.

In terms of biological role, forms part of the ribosomal stalk which helps the ribosome interact with GTP-bound translation factors. In Salinispora tropica (strain ATCC BAA-916 / DSM 44818 / JCM 13857 / NBRC 105044 / CNB-440), this protein is Large ribosomal subunit protein uL11.